Consider the following 176-residue polypeptide: DLNKVFPPEVAVFEPSEAEISHTQKATLVCLATGFFPDHVELSWWVNGKEVHSGVSTDPQPLKEQPALNDSRYCLSSRLRVSATFWQNPRNHFRCQVQFYGLSENDEWTQDRAKPVTQIVSAEAWGRADCGFTSVSYQQGVLSATILYEILLGKATLYAVLVSALVLMAMVKRKDF.

In terms of domain architecture, Ig-like C1-type spans 8-117 (PEVAVFEPSE…WTQDRAKPVT (110 aa)). The cysteines at positions 30 and 95 are disulfide-linked. The N-linked (GlcNAc...) asparagine glycan is linked to Asn69. The segment at 130 to 144 (CGFTSVSYQQGVLSA) is connecting peptide. A helical membrane pass occupies residues 150-170 (ILLGKATLYAVLVSALVLMAM). Residues 171-176 (VKRKDF) are Cytoplasmic-facing.

As to quaternary structure, alpha-beta TR is a heterodimer composed of an alpha and beta chain; disulfide-linked. The alpha-beta TR is associated with the transmembrane signaling CD3 coreceptor proteins to form the TR-CD3 (TcR or TCR). The assembly of alpha-beta TR heterodimers with CD3 occurs in the endoplasmic reticulum where a single alpha-beta TR heterodimer associates with one CD3D-CD3E heterodimer, one CD3G-CD3E heterodimer and one CD247 homodimer forming a stable octameric structure. CD3D-CD3E and CD3G-CD3E heterodimers preferentially associate with TR alpha and TR beta chains, respectively. The association of the CD247 homodimer is the last step of TcR assembly in the endoplasmic reticulum and is required for transport to the cell surface.

It localises to the cell membrane. Its function is as follows. Constant region of T cell receptor (TR) beta chain. Alpha-beta T cell receptors are antigen specific receptors which are essential to the immune response and are present on the cell surface of T lymphocytes. Recognize peptide-major histocompatibility (MH) (pMH) complexes that are displayed by antigen presenting cells (APC), a prerequisite for efficient T cell adaptive immunity against pathogens. Binding of alpha-beta TR to pMH complex initiates TR-CD3 clustering on the cell surface and intracellular activation of LCK that phosphorylates the ITAM motifs of CD3G, CD3D, CD3E and CD247 enabling the recruitment of ZAP70. In turn, ZAP70 phosphorylates LAT, which recruits numerous signaling molecules to form the LAT signalosome. The LAT signalosome propagates signal branching to three major signaling pathways, the calcium, the mitogen-activated protein kinase (MAPK) kinase and the nuclear factor NF-kappa-B (NF-kB) pathways, leading to the mobilization of transcription factors that are critical for gene expression and essential for T cell growth and differentiation. The T cell repertoire is generated in the thymus, by V-(D)-J rearrangement. This repertoire is then shaped by intrathymic selection events to generate a peripheral T cell pool of self-MH restricted, non-autoaggressive T cells. Post-thymic interaction of alpha-beta TR with the pMH complexes shapes TR structural and functional avidity. The polypeptide is T cell receptor beta constant 1 (Homo sapiens (Human)).